The chain runs to 135 residues: DNA-directed RNA polymerase subunit omega (135 aa).

The protein belongs to the RNA polymerase subunit omega family. As to quaternary structure, the RNAP catalytic core consists of 2 alpha, 1 beta, 1 beta' and 1 omega subunit. When a sigma factor is associated with the core the holoenzyme is formed, which can initiate transcription.

It carries out the reaction RNA(n) + a ribonucleoside 5'-triphosphate = RNA(n+1) + diphosphate. In terms of biological role, promotes RNA polymerase assembly. Latches the N- and C-terminal regions of the beta' subunit thereby facilitating its interaction with the beta and alpha subunits. The sequence is that of DNA-directed RNA polymerase subunit omega from Rhizobium meliloti (strain 1021) (Ensifer meliloti).